Reading from the N-terminus, the 226-residue chain is 2-C-methyl-D-erythritol 4-phosphate cytidylyltransferase (226 aa).

This sequence belongs to the IspD/TarI cytidylyltransferase family. IspD subfamily.

The catalysed reaction is 2-C-methyl-D-erythritol 4-phosphate + CTP + H(+) = 4-CDP-2-C-methyl-D-erythritol + diphosphate. The protein operates within isoprenoid biosynthesis; isopentenyl diphosphate biosynthesis via DXP pathway; isopentenyl diphosphate from 1-deoxy-D-xylulose 5-phosphate: step 2/6. Its function is as follows. Catalyzes the formation of 4-diphosphocytidyl-2-C-methyl-D-erythritol from CTP and 2-C-methyl-D-erythritol 4-phosphate (MEP). The chain is 2-C-methyl-D-erythritol 4-phosphate cytidylyltransferase from Trichodesmium erythraeum (strain IMS101).